Here is a 670-residue protein sequence, read N- to C-terminus: DNA ligase (670 aa).

NAD(+) contacts are provided by residues Asp34–Asp38, Ser83–Leu84, and Glu117. Lys119 serves as the catalytic N6-AMP-lysine intermediate. Residues Arg140, Glu177, Lys293, and Lys317 each coordinate NAD(+). Zn(2+) is bound by residues Cys411, Cys414, Cys429, and Cys434. A BRCT domain is found at Lys591–Gly670.

Belongs to the NAD-dependent DNA ligase family. LigA subfamily. Requires Mg(2+) as cofactor. The cofactor is Mn(2+).

The catalysed reaction is NAD(+) + (deoxyribonucleotide)n-3'-hydroxyl + 5'-phospho-(deoxyribonucleotide)m = (deoxyribonucleotide)n+m + AMP + beta-nicotinamide D-nucleotide.. Its function is as follows. DNA ligase that catalyzes the formation of phosphodiester linkages between 5'-phosphoryl and 3'-hydroxyl groups in double-stranded DNA using NAD as a coenzyme and as the energy source for the reaction. It is essential for DNA replication and repair of damaged DNA. This chain is DNA ligase, found in Geobacter sulfurreducens (strain ATCC 51573 / DSM 12127 / PCA).